The following is a 415-amino-acid chain: Probable carboxypeptidase ACLA_013260 (415 aa).

Positions 1 to 17 (MKFPWLLLVKGAASVAA) are cleaved as a signal peptide. Asn97 carries an N-linked (GlcNAc...) asparagine glycan. Asp145 lines the Zn(2+) pocket. Catalysis depends on Glu177, which acts as the Proton acceptor. Residue Glu178 coordinates Zn(2+). Asn271 carries an N-linked (GlcNAc...) asparagine glycan.

It belongs to the peptidase M20A family. It depends on Zn(2+) as a cofactor.

The protein resides in the secreted. The polypeptide is Probable carboxypeptidase ACLA_013260 (Aspergillus clavatus (strain ATCC 1007 / CBS 513.65 / DSM 816 / NCTC 3887 / NRRL 1 / QM 1276 / 107)).